The sequence spans 555 residues: Formate--tetrahydrofolate ligase (555 aa).

Threonine 65–threonine 72 contributes to the ATP binding site.

The protein belongs to the formate--tetrahydrofolate ligase family.

It catalyses the reaction (6S)-5,6,7,8-tetrahydrofolate + formate + ATP = (6R)-10-formyltetrahydrofolate + ADP + phosphate. It participates in one-carbon metabolism; tetrahydrofolate interconversion. This chain is Formate--tetrahydrofolate ligase, found in Thermoanaerobacter sp. (strain X514).